The chain runs to 484 residues: Phosphomevalonate kinase erg8 (484 aa).

The segment at 54–77 is disordered; the sequence is REAASGSAHGRSDTPQAEGNVHGD. 184 to 194 is an ATP binding site; that stretch reads AHKTGLGSSAA.

Belongs to the GHMP kinase family. Mevalonate kinase subfamily.

The catalysed reaction is (R)-5-phosphomevalonate + ATP = (R)-5-diphosphomevalonate + ADP. Its pathway is isoprenoid biosynthesis; isopentenyl diphosphate biosynthesis via mevalonate pathway; isopentenyl diphosphate from (R)-mevalonate: step 2/3. Functionally, phosphomevalonate kinase; part of the second module of ergosterol biosynthesis pathway that includes the middle steps of the pathway. Erg8 converts 5-phosphomevalonate to 5-diphosphomevalonate. The second module is carried out in the vacuole and involves the formation of farnesyl diphosphate, which is also an important intermediate in the biosynthesis of ubiquinone, dolichol, heme and prenylated proteins. Activity by the mevalonate kinase erg12 (AFUA_4G07780) first converts mevalonate into 5-phosphomevalonate. 5-phosphomevalonate is then further converted to 5-diphosphomevalonate by the phosphomevalonate kinase erg8 (AFUA_5G10680). The diphosphomevalonate decarboxylase mvd1 (AFUA_4G07130) then produces isopentenyl diphosphate. The isopentenyl-diphosphate delta-isomerase idi1 (AFUA_6G11160) then catalyzes the 1,3-allylic rearrangement of the homoallylic substrate isopentenyl (IPP) to its highly electrophilic allylic isomer, dimethylallyl diphosphate (DMAPP). Finally the farnesyl diphosphate synthase erg20 (AFUA_5G02450) catalyzes the sequential condensation of isopentenyl pyrophosphate with dimethylallyl pyrophosphate, and then with the resultant geranylpyrophosphate to the ultimate product farnesyl pyrophosphate. The sequence is that of Phosphomevalonate kinase erg8 from Aspergillus fumigatus (strain ATCC MYA-4609 / CBS 101355 / FGSC A1100 / Af293) (Neosartorya fumigata).